The sequence spans 225 residues: Urease accessory protein UreG 2 (225 aa).

Residue 31–38 participates in GTP binding; the sequence is GPVGSGKT.

It belongs to the SIMIBI class G3E GTPase family. UreG subfamily. In terms of assembly, homodimer. UreD, UreF and UreG form a complex that acts as a GTP-hydrolysis-dependent molecular chaperone, activating the urease apoprotein by helping to assemble the nickel containing metallocenter of UreC. The UreE protein probably delivers the nickel.

It localises to the cytoplasm. Facilitates the functional incorporation of the urease nickel metallocenter. This process requires GTP hydrolysis, probably effectuated by UreG. The chain is Urease accessory protein UreG 2 from Streptomyces griseus subsp. griseus (strain JCM 4626 / CBS 651.72 / NBRC 13350 / KCC S-0626 / ISP 5235).